A 681-amino-acid chain; its full sequence is UvrABC system protein C (681 aa).

The segment at 1-23 is disordered; that stretch reads MNGKKLPDGGILFDETDDEDDDA. Over residues 14–23 the composition is skewed to acidic residues; that stretch reads DETDDEDDDA. A GIY-YIG domain is found at 67 to 145; it reads NSPGVYRMFN…IKRLRPRFNV (79 aa). The UVR domain maps to 255-290; the sequence is QAVKTAIARQMNEASEDLDFERAAIYRDRLAALSHV.

The protein belongs to the UvrC family. Interacts with UvrB in an incision complex.

The protein localises to the cytoplasm. The UvrABC repair system catalyzes the recognition and processing of DNA lesions. UvrC both incises the 5' and 3' sides of the lesion. The N-terminal half is responsible for the 3' incision and the C-terminal half is responsible for the 5' incision. This is UvrABC system protein C from Agrobacterium fabrum (strain C58 / ATCC 33970) (Agrobacterium tumefaciens (strain C58)).